Reading from the N-terminus, the 310-residue chain is Acetylglutamate kinase (310 aa).

Substrate contacts are provided by residues 79–80, Arg101, and Asn206; that span reads GG.

Belongs to the acetylglutamate kinase family. ArgB subfamily.

It is found in the cytoplasm. The catalysed reaction is N-acetyl-L-glutamate + ATP = N-acetyl-L-glutamyl 5-phosphate + ADP. Its pathway is amino-acid biosynthesis; L-arginine biosynthesis; N(2)-acetyl-L-ornithine from L-glutamate: step 2/4. Functionally, catalyzes the ATP-dependent phosphorylation of N-acetyl-L-glutamate. This chain is Acetylglutamate kinase, found in Rhodospirillum rubrum (strain ATCC 11170 / ATH 1.1.1 / DSM 467 / LMG 4362 / NCIMB 8255 / S1).